A 137-amino-acid chain; its full sequence is Small ribosomal subunit protein uS12 (137 aa).

Residues 31 to 41 (MSRKQTNNTAP) are compositionally biased toward polar residues. The disordered stretch occupies residues 31–57 (MSRKQTNNTAPQKRGVATRVGTMTPKK). D102 carries the post-translational modification 3-methylthioaspartic acid.

It belongs to the universal ribosomal protein uS12 family. As to quaternary structure, part of the 30S ribosomal subunit. Contacts proteins S8 and S17. May interact with IF1 in the 30S initiation complex.

Functionally, with S4 and S5 plays an important role in translational accuracy. Its function is as follows. Interacts with and stabilizes bases of the 16S rRNA that are involved in tRNA selection in the A site and with the mRNA backbone. Located at the interface of the 30S and 50S subunits, it traverses the body of the 30S subunit contacting proteins on the other side and probably holding the rRNA structure together. The combined cluster of proteins S8, S12 and S17 appears to hold together the shoulder and platform of the 30S subunit. The chain is Small ribosomal subunit protein uS12 from Oenococcus oeni (strain ATCC BAA-331 / PSU-1).